The sequence spans 189 residues: MAPLRVERAPGGSRLGVTRAQRPTALCLPPLLLLLLLLLGAVSASPESLNQSLPESQNQSHPTEDSLVSKGKMEDYETHVLPCWYEYKSCMDSVKDWCNWTLISRHYSDLQNCLEYNADKFGLGFPNPLAENIILEAHLIHFANCSLVQPTFSDPPEDVLLAMIIAPICLIPFLVTLVVWRSKDSDAQA.

The N-terminal stretch at 1 to 44 is a signal peptide; the sequence is MAPLRVERAPGGSRLGVTRAQRPTALCLPPLLLLLLLLLGAVSA. The Extracellular portion of the chain corresponds to 45-157; that stretch reads SPESLNQSLP…VQPTFSDPPE (113 aa). Positions 49–61 are enriched in polar residues; it reads LNQSLPESQNQSH. Residues 49-69 are disordered; it reads LNQSLPESQNQSHPTEDSLVS. Residues Asn-50, Asn-58, Asn-99, and Asn-144 are each glycosylated (N-linked (GlcNAc...) asparagine). 2 disulfide bridges follow: Cys-83/Cys-113 and Cys-98/Cys-145. A helical membrane pass occupies residues 158-179; that stretch reads DVLLAMIIAPICLIPFLVTLVV. At 180–189 the chain is on the cytoplasmic side; that stretch reads WRSKDSDAQA.

Belongs to the RAMP family. In terms of assembly, heterodimer of CALCRL and RAMP2; the interaction forms the receptor complex for adrenomedullin/ADM. Heterodimer of CALCR and RAMP2; interaction forms the AMYR2 receptor complex for calcitonin/CALC and amylin/IAPP. As to expression, ubiquitous. Expressed predominantly in embryonic brain, lung and gut and in adult heart, lung, skeletal muscle and brain.

The protein localises to the cell membrane. In terms of biological role, accessory protein that interacts with and modulates the function of G-protein coupled receptors including calcitonin gene-related peptide type 1 receptor (CALCRL) and calcitonin receptor (CALCR). Required for the transport of CALCRL to the plasma membrane. Together with CALCRL, form a receptor complex for adrenomedullin/ADM. Together with CALCR, act as a receptor complex for calcitonin/CT/CALC. Together with CALCR, also act as a receptor complex for amylin/IAPP. The polypeptide is Receptor activity-modifying protein 2 (Mus musculus (Mouse)).